Reading from the N-terminus, the 122-residue chain is Large ribosomal subunit protein uL14c (122 aa).

Belongs to the universal ribosomal protein uL14 family. In terms of assembly, part of the 50S ribosomal subunit.

It is found in the plastid. The protein localises to the chloroplast. Its function is as follows. Binds to 23S rRNA. This chain is Large ribosomal subunit protein uL14c, found in Chlorokybus atmophyticus (Soil alga).